Consider the following 756-residue polypeptide: Protein O-mannosyl-transferase 2 (756 aa).

A run of 7 helical transmembrane segments spans residues 64-84 (AHVP…TRFY), 110-130 (TFFF…AGYL), 156-176 (AFCA…VLEL), 179-199 (SSTA…CITL), 203-223 (ILLD…MVKF), 245-265 (CLSG…LVGI), and 293-313 (VFGL…IHFI). 3 consecutive MIR domains span residues 344 to 400 (PEYL…VKRL), 410 to 466 (PELV…VEVC), and 471 to 528 (GDPV…IEDH). A run of 4 helical transmembrane segments spans residues 602–622 (PVIW…LTVA), 643–663 (LMEG…PFYI), 672–692 (HYFP…DILL), and 713–733 (SVLL…SYGM).

This sequence belongs to the glycosyltransferase 39 family. As to expression, widely expressed. Has particularly strong expression in ovary, testis, liver, brain, muscle, heart and eye.

It is found in the endoplasmic reticulum membrane. The enzyme catalyses a di-trans,poly-cis-dolichyl beta-D-mannosyl phosphate + L-seryl-[protein] = 3-O-(alpha-D-mannosyl)-L-seryl-[protein] + a di-trans,poly-cis-dolichyl phosphate + H(+). It carries out the reaction a di-trans,poly-cis-dolichyl beta-D-mannosyl phosphate + L-threonyl-[protein] = 3-O-(alpha-D-mannosyl)-L-threonyl-[protein] + a di-trans,poly-cis-dolichyl phosphate + H(+). It functions in the pathway protein modification; protein glycosylation. In terms of biological role, transfers mannosyl residues to the hydroxyl group of serine or threonine residues. Coexpression of both POMT1 and POMT2 is necessary for enzyme activity, expression of either POMT1 or POMT2 alone is insufficient. This chain is Protein O-mannosyl-transferase 2, found in Danio rerio (Zebrafish).